We begin with the raw amino-acid sequence, 376 residues long: Protein-tyrosine sulfotransferase 2 (376 aa).

The Cytoplasmic segment spans residues 1–8 (MRLSVRKV). A helical; Signal-anchor for type II membrane protein membrane pass occupies residues 9–25 (LLAVGCALALVLAVQLG). The Lumenal portion of the chain corresponds to 26–376 (QQVLECRAVL…NSTSPHLGSS (351 aa)). Residue 77–81 (RSGTT) participates in 3'-phosphoadenylyl sulfate binding. Cys95 and Cys155 are joined by a disulfide. Glu98 functions as the Proton donor/acceptor in the catalytic mechanism. An interaction with peptide substrate region spans residues 100 to 104 (RIIPR). The 3'-phosphoadenylyl sulfate site is built by Arg182, Ser190, and Arg194. A disulfide bridge connects residues Cys224 and Cys232. 3'-phosphoadenylyl sulfate is bound by residues Tyr237, 284–293 (STDQVIKPVN), and Lys299. Asn342 and Asn367 each carry an N-linked (GlcNAc...) asparagine glycan.

It belongs to the protein sulfotransferase family. Homodimer. Can also form heterodimers with TPST1. In terms of processing, N-glycosylated.

Its subcellular location is the golgi apparatus membrane. The catalysed reaction is L-tyrosyl-[protein] + 3'-phosphoadenylyl sulfate = O-sulfo-L-tyrosine-[protein] + adenosine 3',5'-bisphosphate + H(+). In terms of biological role, catalyzes the O-sulfation of tyrosine residues within acidic motifs of polypeptides, using 3'-phosphoadenylyl sulfate (PAPS) as cosubstrate. This Rattus norvegicus (Rat) protein is Protein-tyrosine sulfotransferase 2 (Tpst2).